The following is a 1530-amino-acid chain: Synaptonemal complex protein 2 (1530 aa).

Residues 439–461 are compositionally biased toward basic and acidic residues; that stretch reads EKSKSPKEFAKPSKYIKNSDKGN. Positions 439 to 480 are disordered; that stretch reads EKSKSPKEFAKPSKYIKNSDKGNRNNSQLEKTTPSKRKMSEA. A phosphoserine mark is found at S457 and S465. T471 carries the post-translational modification Phosphothreonine. Phosphoserine occurs at positions 494, 519, 529, and 538. Positions 496 to 555 are disordered; that stretch reads VLFSNTSIPPRRRRIKPPLQMTSSAEKPSVSQTSENRVDNAASLKSRSSEGRHRRDNIDK. Positions 515–530 are enriched in polar residues; that stretch reads QMTSSAEKPSVSQTSE. Basic and acidic residues predominate over residues 542–555; it reads RSSEGRHRRDNIDK. T619 carries the phosphothreonine modification. Disordered regions lie at residues 653-676, 693-717, and 755-795; these read QKSS…KKEQ, HNQQ…SDWP, and DKNP…SKGK. S660 and S664 each carry phosphoserine. Polar residues-rich tracts occupy residues 695–713 and 755–764; these read QQQN…NAKQ and DKNPSASKNV. S936 carries the post-translational modification Phosphoserine. A Phosphothreonine modification is found at T938. The interval 962-1003 is disordered; that stretch reads QLIDYSRNKNVKNHKSGKSRSSLEKGQPSSKMTPSKNITKKM. A compositionally biased stretch (basic residues) spans 970–979; that stretch reads KNVKNHKSGK. Polar residues predominate over residues 988–998; the sequence is QPSSKMTPSKN. A phosphoserine mark is found at S1136, S1138, S1145, S1161, and S1177. The residue at position 1189 (T1189) is a Phosphothreonine. Phosphoserine occurs at positions 1204, 1234, 1253, 1295, and 1297. T1339 carries the phosphothreonine modification.

Belongs to the SYCP2 family. Component of the lateral elements of synaptonemal complexes. Heterodimer with SYCP3. Interacts with SMC1A and SMC3. Interacts with TEX11. Phosphorylated.

It is found in the nucleus. The protein localises to the chromosome. Functionally, major component of the axial/lateral elements of synaptonemal complexes (SCS) during meiotic prophase. Plays a role in the assembly of synaptonemal complexes. Required for normal meiotic chromosome synapsis during oocyte and spermatocyte development and for normal male and female fertility. Required for insertion of SYCP3 into synaptonemal complexes. May be involved in the organization of chromatin by temporarily binding to DNA scaffold attachment regions. Requires SYCP3, but not SYCP1, in order to be incorporated into the axial/lateral elements. The polypeptide is Synaptonemal complex protein 2 (SYCP2) (Homo sapiens (Human)).